The sequence spans 177 residues: NAD(P)H-quinone oxidoreductase subunit 6, chloroplastic (177 aa).

5 helical membrane-spanning segments follow: residues 10 to 30, 32 to 52, 61 to 81, 93 to 115, and 152 to 172; these read ILLV…VLLT, PIYS…FHIL, AQLL…VMFM, WTVG…IATI, and FFLP…GAIA.

It belongs to the complex I subunit 6 family. NDH is composed of at least 16 different subunits, 5 of which are encoded in the nucleus.

The protein localises to the plastid. Its subcellular location is the chloroplast thylakoid membrane. It catalyses the reaction a plastoquinone + NADH + (n+1) H(+)(in) = a plastoquinol + NAD(+) + n H(+)(out). It carries out the reaction a plastoquinone + NADPH + (n+1) H(+)(in) = a plastoquinol + NADP(+) + n H(+)(out). Its function is as follows. NDH shuttles electrons from NAD(P)H:plastoquinone, via FMN and iron-sulfur (Fe-S) centers, to quinones in the photosynthetic chain and possibly in a chloroplast respiratory chain. The immediate electron acceptor for the enzyme in this species is believed to be plastoquinone. Couples the redox reaction to proton translocation, and thus conserves the redox energy in a proton gradient. The chain is NAD(P)H-quinone oxidoreductase subunit 6, chloroplastic (ndhG) from Amborella trichopoda.